A 197-amino-acid chain; its full sequence is Small ribosomal subunit protein uS7 (197 aa).

Belongs to the universal ribosomal protein uS7 family. Part of the 30S ribosomal subunit.

In terms of biological role, one of the primary rRNA binding proteins, it binds directly to 16S rRNA where it nucleates assembly of the head domain of the 30S subunit. Is located at the subunit interface close to the decoding center. The protein is Small ribosomal subunit protein uS7 of Methanopyrus kandleri (strain AV19 / DSM 6324 / JCM 9639 / NBRC 100938).